The sequence spans 702 residues: Polyribonucleotide nucleotidyltransferase (702 aa).

Residues aspartate 487 and aspartate 493 each coordinate Mg(2+). The region spanning 554–613 (PRLLTIKIHPDKIREVIGKGGSTIQAITKETGTQIDIQDDGTIVIASVNAIAAQAAKARI) is the KH domain. In terms of domain architecture, S1 motif spans 623 to 691 (GRIYEGKVAK…KQGRIRLSMK (69 aa)).

It belongs to the polyribonucleotide nucleotidyltransferase family. In terms of assembly, component of the RNA degradosome, which is a multiprotein complex involved in RNA processing and mRNA degradation. Mg(2+) is required as a cofactor.

It is found in the cytoplasm. It carries out the reaction RNA(n+1) + phosphate = RNA(n) + a ribonucleoside 5'-diphosphate. Its function is as follows. Involved in mRNA degradation. Catalyzes the phosphorolysis of single-stranded polyribonucleotides processively in the 3'- to 5'-direction. In Stenotrophomonas maltophilia (strain R551-3), this protein is Polyribonucleotide nucleotidyltransferase.